Reading from the N-terminus, the 126-residue chain is Small ribosomal subunit protein uS13 (126 aa).

The tract at residues 98–126 (VRGQSTKNNARTRKGKRKTVANKKKAAKK) is disordered. A compositionally biased stretch (basic residues) spans 107-126 (ARTRKGKRKTVANKKKAAKK).

This sequence belongs to the universal ribosomal protein uS13 family. Part of the 30S ribosomal subunit. Forms a loose heterodimer with protein S19. Forms two bridges to the 50S subunit in the 70S ribosome.

Functionally, located at the top of the head of the 30S subunit, it contacts several helices of the 16S rRNA. In the 70S ribosome it contacts the 23S rRNA (bridge B1a) and protein L5 of the 50S subunit (bridge B1b), connecting the 2 subunits; these bridges are implicated in subunit movement. Contacts the tRNAs in the A and P-sites. In Amoebophilus asiaticus (strain 5a2), this protein is Small ribosomal subunit protein uS13.